The chain runs to 212 residues: Phosphatidylserine decarboxylase proenzyme (212 aa).

Ser-182 serves as the catalytic Schiff-base intermediate with substrate; via pyruvic acid. At Ser-182 the chain carries Pyruvic acid (Ser); by autocatalysis.

The protein belongs to the phosphatidylserine decarboxylase family. PSD-A subfamily. In terms of assembly, heterodimer of a large membrane-associated beta subunit and a small pyruvoyl-containing alpha subunit. It depends on pyruvate as a cofactor. Post-translationally, is synthesized initially as an inactive proenzyme. Formation of the active enzyme involves a self-maturation process in which the active site pyruvoyl group is generated from an internal serine residue via an autocatalytic post-translational modification. Two non-identical subunits are generated from the proenzyme in this reaction, and the pyruvate is formed at the N-terminus of the alpha chain, which is derived from the carboxyl end of the proenzyme. The post-translation cleavage follows an unusual pathway, termed non-hydrolytic serinolysis, in which the side chain hydroxyl group of the serine supplies its oxygen atom to form the C-terminus of the beta chain, while the remainder of the serine residue undergoes an oxidative deamination to produce ammonia and the pyruvoyl prosthetic group on the alpha chain.

It is found in the cell membrane. The enzyme catalyses a 1,2-diacyl-sn-glycero-3-phospho-L-serine + H(+) = a 1,2-diacyl-sn-glycero-3-phosphoethanolamine + CO2. The protein operates within phospholipid metabolism; phosphatidylethanolamine biosynthesis; phosphatidylethanolamine from CDP-diacylglycerol: step 2/2. Functionally, catalyzes the formation of phosphatidylethanolamine (PtdEtn) from phosphatidylserine (PtdSer). The polypeptide is Phosphatidylserine decarboxylase proenzyme (Paraburkholderia phytofirmans (strain DSM 17436 / LMG 22146 / PsJN) (Burkholderia phytofirmans)).